A 348-amino-acid polypeptide reads, in one-letter code: Rhodopsin (348 aa).

Topologically, residues 1–33 are extracellular; that stretch reads TEGPYFYIPMVNTTGIVRSPYEYPQYYLVNPAA. N-linked (GlcNAc...) asparagine glycosylation is present at Asn-12. The chain crosses the membrane as a helical span at residues 34-58; sequence YAMLGAYMFFLIIVGFPVNFMTLYV. Residues 59–70 are Cytoplasmic-facing; that stretch reads TLEHKKLRTPLN. A helical membrane pass occupies residues 71–93; sequence YILLNLAVADLFMVIGGFTTTIY. Residues 94-107 lie on the Extracellular side of the membrane; sequence TSMHGYFVLGRLGC. Cys-107 and Cys-184 are joined by a disulfide. Residues 108–130 form a helical membrane-spanning segment; the sequence is NIEGFFATLGGMISLWSLAVLAI. Residues 131–133 carry the 'Ionic lock' involved in activated form stabilization motif; the sequence is ERW. The Cytoplasmic segment spans residues 131–149; that stretch reads ERWVVVCKPISNFRFGENH. The chain crosses the membrane as a helical span at residues 150–170; the sequence is AIMGVSLTWAMALACTVPPLV. The Extracellular segment spans residues 171–199; the sequence is GWSRYIPEGMQCSCGIDYYTRAEGFNNES. The N-linked (GlcNAc...) asparagine glycan is linked to Asn-197. A helical transmembrane segment spans residues 200–221; sequence FVLYMFFCHFTIPLTIIFFCYG. Over 222-249 the chain is Cytoplasmic; it reads RLLCAVKEAAAAQQESETTQRAEREVTR. The helical transmembrane segment at 250–271 threads the bilayer; it reads MVIIMVIGFLICWLPYASVAWF. Residues 272-283 are Extracellular-facing; it reads IFTHQGSEFGPL. The helical transmembrane segment at 284–305 threads the bilayer; sequence FMTIPAFFAKSSSIYNPMIYIC. Lys-293 is subject to N6-(retinylidene)lysine. The Cytoplasmic portion of the chain corresponds to 306–348; it reads MNKQFRHCMITTLFCGKNPFEGEEEGASSTKTEASSASSVSPA. The S-palmitoyl cysteine moiety is linked to residue Cys-320. The interval 327–348 is disordered; the sequence is GEEEGASSTKTEASSASSVSPA. Low complexity predominate over residues 332-348; that stretch reads ASSTKTEASSASSVSPA.

The protein belongs to the G-protein coupled receptor 1 family. Opsin subfamily. Phosphorylated on some or all of the serine and threonine residues present in the C-terminal region. Post-translationally, contains one covalently linked retinal chromophore.

It is found in the membrane. The protein resides in the cell projection. It localises to the cilium. The protein localises to the photoreceptor outer segment. Functionally, photoreceptor required for image-forming vision at low light intensity. While most salt water fish species use retinal as chromophore, most freshwater fish use 3-dehydroretinal, or a mixture of retinal and 3-dehydroretinal. Light-induced isomerization of 11-cis to all-trans retinal triggers a conformational change that activates signaling via G-proteins. Subsequent receptor phosphorylation mediates displacement of the bound G-protein alpha subunit by arrestin and terminates signaling. The protein is Rhodopsin (rho) of Sargocentron microstoma (Smallmouth squirrelfish).